We begin with the raw amino-acid sequence, 184 residues long: Adenine phosphoribosyltransferase (184 aa).

Belongs to the purine/pyrimidine phosphoribosyltransferase family. As to quaternary structure, homodimer.

It is found in the cytoplasm. It carries out the reaction AMP + diphosphate = 5-phospho-alpha-D-ribose 1-diphosphate + adenine. It participates in purine metabolism; AMP biosynthesis via salvage pathway; AMP from adenine: step 1/1. In terms of biological role, catalyzes a salvage reaction resulting in the formation of AMP, that is energically less costly than de novo synthesis. In Corynebacterium diphtheriae (strain ATCC 700971 / NCTC 13129 / Biotype gravis), this protein is Adenine phosphoribosyltransferase.